A 651-amino-acid polypeptide reads, in one-letter code: Acetyl-coenzyme A synthetase (651 aa).

CoA-binding positions include Arg191–Lys194, Thr311, and Asn335. Residues Gly387–Pro389, Asp411–Thr416, Asp500, and Arg515 each bind ATP. Ser523 contributes to the CoA binding site. Arg526 contacts ATP. Positions 537, 539, and 542 each coordinate Mg(2+). Position 584 (Arg584) interacts with CoA. Lys609 carries the N6-acetyllysine modification.

Belongs to the ATP-dependent AMP-binding enzyme family. It depends on Mg(2+) as a cofactor. Acetylated. Deacetylation by the SIR2-homolog deacetylase activates the enzyme.

It catalyses the reaction acetate + ATP + CoA = acetyl-CoA + AMP + diphosphate. Its function is as follows. Catalyzes the conversion of acetate into acetyl-CoA (AcCoA), an essential intermediate at the junction of anabolic and catabolic pathways. AcsA undergoes a two-step reaction. In the first half reaction, AcsA combines acetate with ATP to form acetyl-adenylate (AcAMP) intermediate. In the second half reaction, it can then transfer the acetyl group from AcAMP to the sulfhydryl group of CoA, forming the product AcCoA. The chain is Acetyl-coenzyme A synthetase from Stutzerimonas stutzeri (strain A1501) (Pseudomonas stutzeri).